Here is a 239-residue protein sequence, read N- to C-terminus: Ribonuclease PH (239 aa).

Phosphate is bound by residues arginine 86 and 124 to 126; that span reads GTR.

The protein belongs to the RNase PH family. As to quaternary structure, homohexameric ring arranged as a trimer of dimers.

It carries out the reaction tRNA(n+1) + phosphate = tRNA(n) + a ribonucleoside 5'-diphosphate. Its function is as follows. Phosphorolytic 3'-5' exoribonuclease that plays an important role in tRNA 3'-end maturation. Removes nucleotide residues following the 3'-CCA terminus of tRNAs; can also add nucleotides to the ends of RNA molecules by using nucleoside diphosphates as substrates, but this may not be physiologically important. Probably plays a role in initiation of 16S rRNA degradation (leading to ribosome degradation) during starvation. The sequence is that of Ribonuclease PH from Rhizobium etli (strain CIAT 652).